The primary structure comprises 327 residues: Phenylalanine--tRNA ligase alpha subunit (327 aa).

E252 is a binding site for Mg(2+).

It belongs to the class-II aminoacyl-tRNA synthetase family. Phe-tRNA synthetase alpha subunit type 1 subfamily. Tetramer of two alpha and two beta subunits. Mg(2+) is required as a cofactor.

It is found in the cytoplasm. The enzyme catalyses tRNA(Phe) + L-phenylalanine + ATP = L-phenylalanyl-tRNA(Phe) + AMP + diphosphate + H(+). The polypeptide is Phenylalanine--tRNA ligase alpha subunit (Shewanella sediminis (strain HAW-EB3)).